Here is a 672-residue protein sequence, read N- to C-terminus: Spermatid perinuclear RNA-binding protein (672 aa).

Positions 5–363 (RSFANDDRHV…ALKRPFEDGL (359 aa)) constitute a DZF domain. The segment at 349–371 (GAGSSALKRPFEDGLGDDKDPNK) is disordered. Residues 357–371 (RPFEDGLGDDKDPNK) are compositionally biased toward basic and acidic residues. The DRBM 1 domain maps to 387-453 (DLMNALMRLN…AVKVLQAMGY (67 aa)). Basic and acidic residues predominate over residues 467–476 (DEKSDNESKN). The segment at 467-514 (DEKSDNESKNDTVSSNSSNNTGNSTTETSSTLEVRTQGPILTASGKNP) is disordered. Residues 477–497 (DTVSSNSSNNTGNSTTETSST) show a composition bias toward low complexity. The DRBM 2 domain occupies 510 to 576 (SGKNPVMELN…ALAALEKLFS (67 aa)). Arg612 and Arg617 each carry asymmetric dimethylarginine.

In terms of assembly, interacts with EIF2AK2. Associates with microtubules; it is unsure whether such interaction is direct or indirect. Isoform 2 is expressed in spermatocytes (at protein level). Expressed in testis, thymus, ovary, liver, kidney, heart, spleen and brain. Expressed in cortex, dentate gyrus and Purkinje cell layer and granule cells of the cerebellum.

The protein localises to the cytoplasm. The protein resides in the cytoskeleton. Functionally, involved in spermatogenesis and sperm function. Plays a role in regulation of cell growth. Binds to double-stranded DNA and RNA. Binds most efficiently to poly(I:C) RNA than to poly(dI:dC) DNA. Also binds to single-stranded poly(G) RNA. Binds non-specifically to the mRNA PRM1 3'-UTR and adenovirus VA RNA. The chain is Spermatid perinuclear RNA-binding protein (Strbp) from Mus musculus (Mouse).